Consider the following 94-residue polypeptide: Sec-independent protein translocase protein TatA (94 aa).

A helical transmembrane segment spans residues methionine 1–phenylalanine 21. The interval alanine 44–arginine 94 is disordered. Positions threonine 62–isoleucine 72 are enriched in polar residues.

This sequence belongs to the TatA/E family. In terms of assembly, the Tat system comprises two distinct complexes: a TatABC complex, containing multiple copies of TatA, TatB and TatC subunits, and a separate TatA complex, containing only TatA subunits. Substrates initially bind to the TatABC complex, which probably triggers association of the separate TatA complex to form the active translocon.

Its subcellular location is the cell membrane. Part of the twin-arginine translocation (Tat) system that transports large folded proteins containing a characteristic twin-arginine motif in their signal peptide across membranes. TatA could form the protein-conducting channel of the Tat system. This chain is Sec-independent protein translocase protein TatA, found in Streptomyces avermitilis (strain ATCC 31267 / DSM 46492 / JCM 5070 / NBRC 14893 / NCIMB 12804 / NRRL 8165 / MA-4680).